Consider the following 218-residue polypeptide: Ribonuclease T (218 aa).

In terms of domain architecture, Exonuclease spans 22–196 (VVVDVETAGF…YDAMKTAELF (175 aa)). 4 residues coordinate Mg(2+): Asp-25, Glu-27, His-183, and Asp-188. His-183 functions as the Proton donor/acceptor in the catalytic mechanism.

The protein belongs to the RNase T family. As to quaternary structure, homodimer. The cofactor is Mg(2+).

Its function is as follows. Trims short 3' overhangs of a variety of RNA species, leaving a one or two nucleotide 3' overhang. Responsible for the end-turnover of tRNA: specifically removes the terminal AMP residue from uncharged tRNA (tRNA-C-C-A). Also appears to be involved in tRNA biosynthesis. This chain is Ribonuclease T, found in Hahella chejuensis (strain KCTC 2396).